Reading from the N-terminus, the 355-residue chain is Tyrosine recombinase XerC (355 aa).

A Core-binding (CB) domain is found at 4–89 (TQFDGDIDSF…AVRGFFAWAY (86 aa)). The segment at 137 to 181 (KDDGGAAAAPGSGKAAGKTADKSADTVNRSEAPARADKRDNARVT) is disordered. Low complexity predominate over residues 141 to 154 (GAAAAPGSGKAAGK). One can recognise a Tyr recombinase domain in the interval 158–349 (KSADTVNRSE…SIEQLKNRYG (192 aa)). The segment covering 168-178 (APARADKRDNA) has biased composition (basic and acidic residues). Catalysis depends on residues arginine 200, lysine 224, histidine 301, arginine 304, and histidine 327. Tyrosine 336 (O-(3'-phospho-DNA)-tyrosine intermediate) is an active-site residue.

This sequence belongs to the 'phage' integrase family. XerC subfamily. In terms of assembly, forms a cyclic heterotetrameric complex composed of two molecules of XerC and two molecules of XerD.

The protein resides in the cytoplasm. Its function is as follows. Site-specific tyrosine recombinase, which acts by catalyzing the cutting and rejoining of the recombining DNA molecules. The XerC-XerD complex is essential to convert dimers of the bacterial chromosome into monomers to permit their segregation at cell division. It also contributes to the segregational stability of plasmids. The protein is Tyrosine recombinase XerC of Bifidobacterium longum (strain DJO10A).